A 409-amino-acid chain; its full sequence is Translation initiation factor 2 subunit gamma (409 aa).

The region spanning 6-203 (QPEVNIGLVG…AVQSEIPTPE (198 aa)) is the tr-type G domain. A G1 region spans residues 15–22 (GHVDHGKT). Mg(2+) is bound by residues aspartate 18, threonine 22, glycine 43, and serine 45. 18–23 (DHGKTT) is a GTP binding site. The interval 43–47 (GISIR) is G2. Positions 90-93 (DAPG) are G3. Residues 146-149 (NKVD) and 181-183 (SAG) contribute to the GTP site. Positions 146–149 (NKVD) are G4. The interval 181–183 (SAG) is G5.

It belongs to the TRAFAC class translation factor GTPase superfamily. Classic translation factor GTPase family. EIF2G subfamily. Heterotrimer composed of an alpha, a beta and a gamma chain. Mg(2+) serves as cofactor.

It carries out the reaction GTP + H2O = GDP + phosphate + H(+). EIF-2 functions in the early steps of protein synthesis by forming a ternary complex with GTP and initiator tRNA. This chain is Translation initiation factor 2 subunit gamma, found in Haloarcula marismortui (strain ATCC 43049 / DSM 3752 / JCM 8966 / VKM B-1809) (Halobacterium marismortui).